The following is an 87-amino-acid chain: Virulence protein PagD (87 aa).

A signal peptide spans 1 to 20; the sequence is MKHHAFMLWSLLIFSFHVLA. A disordered region spans residues 46–87; sequence QPPTNTDKKQARQISSPSCPTTKPMMSAPVNDARKGNTFSRT. Residues 57–66 show a composition bias toward polar residues; the sequence is RQISSPSCPT.

Putative function in virulence. Could be involved in promoting S.typhimurium survival within macrophages. The chain is Virulence protein PagD (pagD) from Salmonella typhimurium (strain LT2 / SGSC1412 / ATCC 700720).